Consider the following 473-residue polypeptide: Photosystem II CP43 reaction center protein (473 aa).

Residues 1 to 14 (MKTLYSLRRFYPVE) constitute a propeptide that is removed on maturation. Position 15 is an N-acetylthreonine (Thr15). Thr15 bears the Phosphothreonine mark. 5 helical membrane passes run 69–93 (LFEV…PHLA), 134–155 (LLGP…KDRN), 178–200 (KALY…RKIT), 255–275 (KPFA…LSYS), and 291–312 (WFNN…ASQA). Glu367 is a [CaMn4O5] cluster binding site. The chain crosses the membrane as a helical span at residues 447–471 (RARAAAAGFEKGIDRDFEPVLSMTP).

It belongs to the PsbB/PsbC family. PsbC subfamily. PSII is composed of 1 copy each of membrane proteins PsbA, PsbB, PsbC, PsbD, PsbE, PsbF, PsbH, PsbI, PsbJ, PsbK, PsbL, PsbM, PsbT, PsbX, PsbY, PsbZ, Psb30/Ycf12, at least 3 peripheral proteins of the oxygen-evolving complex and a large number of cofactors. It forms dimeric complexes. It depends on Binds multiple chlorophylls and provides some of the ligands for the Ca-4Mn-5O cluster of the oxygen-evolving complex. It may also provide a ligand for a Cl- that is required for oxygen evolution. PSII binds additional chlorophylls, carotenoids and specific lipids. as a cofactor.

It localises to the plastid. The protein localises to the chloroplast thylakoid membrane. In terms of biological role, one of the components of the core complex of photosystem II (PSII). It binds chlorophyll and helps catalyze the primary light-induced photochemical processes of PSII. PSII is a light-driven water:plastoquinone oxidoreductase, using light energy to abstract electrons from H(2)O, generating O(2) and a proton gradient subsequently used for ATP formation. The protein is Photosystem II CP43 reaction center protein of Liriodendron tulipifera (Tuliptree).